Here is a 397-residue protein sequence, read N- to C-terminus: 1-deoxy-D-xylulose 5-phosphate reductoisomerase (397 aa).

NADPH contacts are provided by Thr12, Gly13, Ser14, Ile15, Gly38, Lys39, Asn40, and Asn126. 1-deoxy-D-xylulose 5-phosphate is bound at residue Lys127. Residue Glu128 participates in NADPH binding. Asp152 serves as a coordination point for Mn(2+). The 1-deoxy-D-xylulose 5-phosphate site is built by Ser153, Glu154, Ser188, and His211. Mn(2+) is bound at residue Glu154. Gly217 contributes to the NADPH binding site. Ser224, Asn229, Lys230, and Glu233 together coordinate 1-deoxy-D-xylulose 5-phosphate. Glu233 contacts Mn(2+).

It belongs to the DXR family. It depends on Mg(2+) as a cofactor. Mn(2+) is required as a cofactor.

The catalysed reaction is 2-C-methyl-D-erythritol 4-phosphate + NADP(+) = 1-deoxy-D-xylulose 5-phosphate + NADPH + H(+). It participates in isoprenoid biosynthesis; isopentenyl diphosphate biosynthesis via DXP pathway; isopentenyl diphosphate from 1-deoxy-D-xylulose 5-phosphate: step 1/6. Catalyzes the NADPH-dependent rearrangement and reduction of 1-deoxy-D-xylulose-5-phosphate (DXP) to 2-C-methyl-D-erythritol 4-phosphate (MEP). The protein is 1-deoxy-D-xylulose 5-phosphate reductoisomerase of Haemophilus influenzae (strain 86-028NP).